A 93-amino-acid polypeptide reads, in one-letter code: Small ribosomal subunit protein uS19 (93 aa).

It belongs to the universal ribosomal protein uS19 family.

Its function is as follows. Protein S19 forms a complex with S13 that binds strongly to the 16S ribosomal RNA. The sequence is that of Small ribosomal subunit protein uS19 from Lawsonia intracellularis (strain PHE/MN1-00).